Here is a 228-residue protein sequence, read N- to C-terminus: Probable septum site-determining protein MinC (228 aa).

The protein belongs to the MinC family. Interacts with MinD and FtsZ.

Its function is as follows. Cell division inhibitor that blocks the formation of polar Z ring septums. Rapidly oscillates between the poles of the cell to destabilize FtsZ filaments that have formed before they mature into polar Z rings. Prevents FtsZ polymerization. The protein is Probable septum site-determining protein MinC of Bacillus mycoides (strain KBAB4) (Bacillus weihenstephanensis).